The sequence spans 630 residues: tRNA uridine 5-carboxymethylaminomethyl modification enzyme MnmG (630 aa).

Residue 13–18 (GGGHAG) coordinates FAD. 273 to 287 (GPRYCPSIEDKVMRF) contacts NAD(+).

This sequence belongs to the MnmG family. Homodimer. Heterotetramer of two MnmE and two MnmG subunits. It depends on FAD as a cofactor.

It is found in the cytoplasm. NAD-binding protein involved in the addition of a carboxymethylaminomethyl (cmnm) group at the wobble position (U34) of certain tRNAs, forming tRNA-cmnm(5)s(2)U34. This is tRNA uridine 5-carboxymethylaminomethyl modification enzyme MnmG from Actinobacillus pleuropneumoniae serotype 7 (strain AP76).